The sequence spans 102 residues: MYPAKYQVVPSGINYSDTPVGTFEQYQPQKAGESSEHFFSKVVVALIVILFAVGIVYLAYTLFLKDLILLLKAKKQKTTTEIGFGNTPLRRPGEGNPNGGPV.

A helical transmembrane segment spans residues 43-63 (VVALIVILFAVGIVYLAYTLF). Residues 82–102 (IGFGNTPLRRPGEGNPNGGPV) are disordered.

The protein belongs to the mastrevirus movement protein family. Interacts with the capsid protein (CP). Part of a MP-CP-viral DNA complex.

It is found in the host membrane. Involved in the viral transport within, and between cells. This chain is Movement protein, found in Tobacco yellow dwarf virus (strain Australia) (TYDV).